The sequence spans 494 residues: GTPase Der (494 aa).

2 EngA-type G domains span residues 2 to 164 and 235 to 407; these read KKIA…PEED and IKIS…KNYS. GTP-binding positions include 8-15, 55-59, 116-119, 241-248, 288-292, and 352-355; these read GRPNVGKS, DTGGL, NKID, GRTNVGKS, DTAGL, and NKWD. A KH-like domain is found at 408-492; that stretch reads QHIKTSELNV…PVLFKAKKRG (85 aa).

It belongs to the TRAFAC class TrmE-Era-EngA-EngB-Septin-like GTPase superfamily. EngA (Der) GTPase family. Associates with the 50S ribosomal subunit.

In terms of biological role, GTPase that plays an essential role in the late steps of ribosome biogenesis. The sequence is that of GTPase Der from Sulfurimonas denitrificans (strain ATCC 33889 / DSM 1251) (Thiomicrospira denitrificans (strain ATCC 33889 / DSM 1251)).